We begin with the raw amino-acid sequence, 132 residues long: ATP synthase epsilon chain (132 aa).

Basic and acidic residues predominate over residues Ile-88–Glu-102. The tract at residues Ile-88–Asp-112 is disordered.

It belongs to the ATPase epsilon chain family. F-type ATPases have 2 components, CF(1) - the catalytic core - and CF(0) - the membrane proton channel. CF(1) has five subunits: alpha(3), beta(3), gamma(1), delta(1), epsilon(1). CF(0) has three main subunits: a, b and c. The F(1)F(0) complex interacts with SpoIIIJ and YqjG; YqgA is found in the same complex.

Its subcellular location is the cell membrane. Produces ATP from ADP in the presence of a proton gradient across the membrane. The polypeptide is ATP synthase epsilon chain (atpC) (Bacillus subtilis (strain 168)).